The sequence spans 69 residues: Cytochrome c oxidase subunit 8A, mitochondrial (69 aa).

A mitochondrion-targeting transit peptide spans 1–25 (MSVLTPLLLRGLTGSARRLPVPRAK). An SIFI-degron motif is present at residues 2 to 19 (SVLTPLLLRGLTGSARRL). Over 26-36 (IHSLPPEEKLG) the chain is Mitochondrial matrix. Residues 37–60 (IMELAVGLTSCFVTFLLPAGWILS) form a helical membrane-spanning segment. The Mitochondrial intermembrane segment spans residues 61–69 (HLETYRRPE).

Belongs to the cytochrome c oxidase VIII family. In terms of assembly, component of the cytochrome c oxidase (complex IV, CIV), a multisubunit enzyme composed of 14 subunits. The complex is composed of a catalytic core of 3 subunits MT-CO1, MT-CO2 and MT-CO3, encoded in the mitochondrial DNA, and 11 supernumerary subunits COX4I, COX5A, COX5B, COX6A, COX6B, COX6C, COX7A, COX7B, COX7C, COX8 and NDUFA4, which are encoded in the nuclear genome. The complex exists as a monomer or a dimer and forms supercomplexes (SCs) in the inner mitochondrial membrane with NADH-ubiquinone oxidoreductase (complex I, CI) and ubiquinol-cytochrome c oxidoreductase (cytochrome b-c1 complex, complex III, CIII), resulting in different assemblies (supercomplex SCI(1)III(2)IV(1) and megacomplex MCI(2)III(2)IV(2)). In response to mitochondrial stress, the precursor protein is ubiquitinated by the SIFI complex in the cytoplasm before mitochondrial import, leading to its degradation. Within the SIFI complex, UBR4 initiates ubiquitin chain that are further elongated or branched by KCMF1.

The protein localises to the mitochondrion inner membrane. It functions in the pathway energy metabolism; oxidative phosphorylation. Component of the cytochrome c oxidase, the last enzyme in the mitochondrial electron transport chain which drives oxidative phosphorylation. The respiratory chain contains 3 multisubunit complexes succinate dehydrogenase (complex II, CII), ubiquinol-cytochrome c oxidoreductase (cytochrome b-c1 complex, complex III, CIII) and cytochrome c oxidase (complex IV, CIV), that cooperate to transfer electrons derived from NADH and succinate to molecular oxygen, creating an electrochemical gradient over the inner membrane that drives transmembrane transport and the ATP synthase. Cytochrome c oxidase is the component of the respiratory chain that catalyzes the reduction of oxygen to water. Electrons originating from reduced cytochrome c in the intermembrane space (IMS) are transferred via the dinuclear copper A center (CU(A)) of subunit 2 and heme A of subunit 1 to the active site in subunit 1, a binuclear center (BNC) formed by heme A3 and copper B (CU(B)). The BNC reduces molecular oxygen to 2 water molecules using 4 electrons from cytochrome c in the IMS and 4 protons from the mitochondrial matrix. The sequence is that of Cytochrome c oxidase subunit 8A, mitochondrial (COX8A) from Hylobates agilis (Agile gibbon).